We begin with the raw amino-acid sequence, 299 residues long: UPF0603 protein OsI_019212, chloroplastic (299 aa).

Composition is skewed to low complexity over residues 1-14 (METLLSPSTLLSPL) and 22-36 (ASPAASASSSSSSPA). The N-terminal 41 residues, 1–41 (METLLSPSTLLSPLRGSKKKPASPAASASSSSSSPARSVVS), are a transit peptide targeting the chloroplast. Disordered stretches follow at residues 1–60 (METL…WRGD) and 244–265 (PDPGGPTFKDNKRESNFKTKEE). A thylakoid-targeting transit peptide spans 42–98 (CALRRQQPPPQAVAAWRGDGGRGGGVGSWATFLQHGLAAAALSLAISMAPAPAPAVA). The span at 252–265 (KDNKRESNFKTKEE) shows a compositional bias: basic and acidic residues. Residues 276–296 (VVGGLLVIAFVVPMAQYYAYI) form a helical membrane-spanning segment.

It belongs to the UPF0603 family.

It is found in the plastid. Its subcellular location is the chloroplast thylakoid membrane. This chain is UPF0603 protein OsI_019212, chloroplastic, found in Oryza sativa subsp. indica (Rice).